We begin with the raw amino-acid sequence, 780 residues long: ATP-dependent 6-phosphofructokinase, muscle type (780 aa).

An N-acetylthreonine modification is found at threonine 2. The N-terminal catalytic PFK domain 1 stretch occupies residues 2–390; sequence THEEHHAAKT…NWEVYKLLAH (389 aa). Residues glycine 25, 88-89, and 118-121 contribute to the ATP site; these read RC and GDGS. Aspartate 119 lines the Mg(2+) pocket. Serine 133 is subject to Phosphoserine. Substrate is bound by residues 164–166, arginine 201, 208–210, glutamate 264, arginine 292, and 298–301; these read SID, MGR, and HVQR. Aspartate 166 functions as the Proton acceptor in the catalytic mechanism. At serine 377 the chain carries Phosphoserine. The segment at 391-401 is interdomain linker; that stretch reads VRPPVSKGGLH. The C-terminal regulatory PFK domain 2 stretch occupies residues 402 to 780; the sequence is TVAVMNVGAP…SRKRSGEAAV (379 aa). Beta-D-fructose 2,6-bisphosphate contacts are provided by residues arginine 471 and 528–532; that span reads TVSNN. A glycan (O-linked (GlcNAc) serine) is linked at serine 530. N6-(2-hydroxyisobutyryl)lysine is present on lysine 557. Beta-D-fructose 2,6-bisphosphate is bound by residues arginine 566, 573 to 575, glutamate 629, arginine 655, and 661 to 664; these read MGG and HMQQ. The residue at position 667 (serine 667) is a Phosphoserine. Position 735 (arginine 735) interacts with beta-D-fructose 2,6-bisphosphate. A Phosphoserine modification is found at serine 775.

It belongs to the phosphofructokinase type A (PFKA) family. ATP-dependent PFK group I subfamily. Eukaryotic two domain clade 'E' sub-subfamily. As to quaternary structure, homo- and heterotetramers. Phosphofructokinase (PFK) enzyme functions as a tetramer composed of different combinations of 3 types of subunits, called PFKM (M), PFKL (L) and PFKP (P). The composition of the PFK tetramer differs according to the tissue type it is present in. The kinetic and regulatory properties of the tetrameric enzyme are dependent on the subunit composition, hence can vary across tissues. Isoform 2 and isoform 3 interact (via N-terminal testis-specific region) with GSTM5. Isoform 2 and isoform 3 interact (via C-terminus) with HK1 (via N-terminal spermatogenic cell-specific region). Mg(2+) is required as a cofactor. Post-translationally, glcNAcylation decreases enzyme activity. As to expression, isoform 1 is expressed in skeletal muscle (at protein level). Isoform 2 and isoform 3 are testis-specific and are detected in quiescent sperm (at protein level). They are first detected in the cytoplasm of round spermatids and subsequently in the flagellum of elongated spermatids extending into the seminiferous tubule lumen (at protein level). Isoform 2 is expressed at higher level than isoform 3 in testis.

Its subcellular location is the cytoplasm. The protein localises to the cell projection. It localises to the cilium. The protein resides in the flagellum. It catalyses the reaction beta-D-fructose 6-phosphate + ATP = beta-D-fructose 1,6-bisphosphate + ADP + H(+). The protein operates within carbohydrate degradation; glycolysis; D-glyceraldehyde 3-phosphate and glycerone phosphate from D-glucose: step 3/4. Its activity is regulated as follows. Allosterically activated by ADP, AMP, or fructose 2,6-bisphosphate, and allosterically inhibited by ATP or citrate. In terms of biological role, catalyzes the phosphorylation of D-fructose 6-phosphate to fructose 1,6-bisphosphate by ATP, the first committing step of glycolysis. This is ATP-dependent 6-phosphofructokinase, muscle type (Pfkm) from Mus musculus (Mouse).